The chain runs to 313 residues: Homeobox protein knotted-1-like 2 (313 aa).

Residues 13 to 40 (DPSSAAASSPNPSFSPGGGGGGGVGGGE) form a disordered region. A compositionally biased stretch (low complexity) spans 14–27 (PSSAAASSPNPSFS). Gly residues predominate over residues 28–38 (PGGGGGGGVGG). The 21-residue stretch at 205–225 (ELKNELKQGYKEKLVDIREEI) folds into the ELK domain. The segment at residues 226-289 (LRKRRAGKLP…NQRKRNWHSN (64 aa)) is a DNA-binding region (homeobox; TALE-type). Positions 282–313 (RKRNWHSNPASSGEKTKKKRNVTGDGGAEQSW) are disordered.

Belongs to the TALE/KNOX homeobox family. As to expression, isoform 1 is expressed in roots, leaf blades, leaf sheaths and flowers. Isoform 2 is expressed in leaf blades, leaf sheaths and flowers.

Its subcellular location is the nucleus. In Oryza sativa subsp. japonica (Rice), this protein is Homeobox protein knotted-1-like 2 (HOS58).